The chain runs to 136 residues: Large ribosomal subunit protein uL16 (136 aa).

The protein belongs to the universal ribosomal protein uL16 family. Part of the 50S ribosomal subunit.

Functionally, binds 23S rRNA and is also seen to make contacts with the A and possibly P site tRNAs. The sequence is that of Large ribosomal subunit protein uL16 from Rickettsia felis (strain ATCC VR-1525 / URRWXCal2) (Rickettsia azadi).